The chain runs to 374 residues: Type II methyltransferase M.NgoFVII (374 aa).

Positions 16-344 constitute an SAM-dependent MTase C5-type domain; sequence PKILSLFSGC…KSILPIFSDN (329 aa). C88 is an active-site residue.

The protein belongs to the class I-like SAM-binding methyltransferase superfamily. C5-methyltransferase family.

The enzyme catalyses a 2'-deoxycytidine in DNA + S-adenosyl-L-methionine = a 5-methyl-2'-deoxycytidine in DNA + S-adenosyl-L-homocysteine + H(+). A methylase, recognizes the double-stranded sequence 5'-GCSGC-3', methylates C-5 on both strands, and protects the DNA from cleavage by the NgoFVII endonuclease. This is Type II methyltransferase M.NgoFVII (ngoFVIIM) from Neisseria gonorrhoeae.